A 378-amino-acid polypeptide reads, in one-letter code: Lysocardiolipin acyltransferase 1 (378 aa).

The next 2 helical transmembrane spans lie at 9–29 and 46–66; these read FVVA…GPFL and IVAT…GAKV. An HXXXXD motif motif is present at residues 85–90; sequence HRTRMD. The next 2 membrane-spanning stretches (helical) occupy residues 302–322 and 336–358; these read LRVL…PMGT and FAAM…LIEL.

This sequence belongs to the 1-acyl-sn-glycerol-3-phosphate acyltransferase family.

It localises to the endoplasmic reticulum membrane. It carries out the reaction a 1-acyl-sn-glycero-3-phosphate + an acyl-CoA = a 1,2-diacyl-sn-glycero-3-phosphate + CoA. The enzyme catalyses a 1-acyl-sn-glycero-3-phospho-(1D-myo-inositol) + an acyl-CoA = a 1,2-diacyl-sn-glycero-3-phospho-(1D-myo-inositol) + CoA. It catalyses the reaction 1-acyl-sn-glycero-3-phospho-(1'-sn-glycerol) + an acyl-CoA = a 1,2-diacyl-sn-glycero-3-phospho-(1'-sn-glycerol) + CoA. The catalysed reaction is 1-hexadecanoyl-sn-glycero-3-phosphate + (9Z)-octadecenoyl-CoA = 1-hexadecanoyl-2-(9Z-octadecenoyl)-sn-glycero-3-phosphate + CoA. It carries out the reaction 1-(9Z-octadecenoyl)-sn-glycero-3-phosphate + (9Z)-octadecenoyl-CoA = 1,2-di-(9Z-octadecenoyl)-sn-glycero-3-phosphate + CoA. The enzyme catalyses 1-(9Z,12Z)-octadecadienoyl-sn-glycero-3-phosphate + (9Z)-octadecenoyl-CoA = 1-(9Z,12Z)-octadecadienoyl-2-(9Z)-octadecenoyl-sn-glycero-3-phosphate + CoA. It catalyses the reaction 1-(9Z,12Z,15Z)-octadecatrienoyl-sn-glycero-3-phosphate + (9Z)-octadecenoyl-CoA = 1-(9Z,12Z,15Z)-octadecatrienoyl-2-(9Z)-octadecenoyl-sn-glycero-3-phosphate + CoA. The catalysed reaction is 1-(9Z-octadecenoyl)-sn-glycero-3-phosphate + hexadecanoyl-CoA = 1-(9Z)-octadecenoyl-2-hexadecanoyl-sn-glycero-3-phosphate + CoA. It carries out the reaction 1-(9Z-octadecenoyl)-sn-glycero-3-phosphate + octadecanoyl-CoA = 1-(9Z-octadecenoyl)-2-octadecanoyl-sn-glycero-3-phosphate + CoA. The enzyme catalyses 1-acyl-sn-glycero-3-phospho-(1'-sn-glycerol) + (9Z)-octadecenoyl-CoA = 1-acyl-2-(9Z-octadecenoyl)-sn-glycero-3-phospho-(1'-sn-glycerol) + CoA. It catalyses the reaction a 1-acyl-sn-glycero-3-phospho-(1D-myo-inositol) + (9Z)-octadecenoyl-CoA = a 1-acyl-2-(9Z-octadecenoyl)-sn-glycero-3-phospho-(1D-myo-inositol) + CoA. The catalysed reaction is 1-hexadecanoyl-sn-glycero-3-phospho-(1D-myo-inositol) + hexadecanoyl-CoA = 1,2-dihexadecanoyl-sn-glycero-3-phospho-(1D-myo-inositol) + CoA. It carries out the reaction 1-hexadecanoyl-sn-glycero-3-phospho-(1D-myo-inositol) + octadecanoyl-CoA = 1-hexadecanoyl-2-octadecanoyl-sn-glycero-3-phospho-(1D-myo-inositol) + CoA. The enzyme catalyses 1-hexadecanoyl-sn-glycero-3-phospho-(1D-myo-inositol) + (9Z)-octadecenoyl-CoA = 1-hexadecanoyl-2-(9Z-octadecenoyl)-sn-glycero-3-phospho-(1D-myo-inositol) + CoA. It catalyses the reaction 1-hexadecanoyl-sn-glycero-3-phospho-(1D-myo-inositol) + (9Z,12Z)-octadecadienoyl-CoA = 1-hexadecanoyl-2-(9Z,12Z-octadecadienoyl)-sn-glycero-3-phospho-(1D-myo-inositol) + CoA. The catalysed reaction is 1-hexadecanoyl-sn-glycero-3-phospho-(1D-myo-inositol) + (5Z,8Z,11Z,14Z)-eicosatetraenoyl-CoA = 1-hexadecanoyl-2-(5Z,8Z,11Z,14Z-eicosatetraenoyl)-sn-glycero-3-phospho-D-myo-inositol + CoA. It carries out the reaction 1-hexadecanoyl-sn-glycero-3-phospho-(1'-sn-glycerol) + hexadecanoyl-CoA = 1,2-dihexadecanoyl-sn-glycero-3-phospho-(1'-sn-glycerol) + CoA. The enzyme catalyses 1-hexadecanoyl-sn-glycero-3-phospho-(1'-sn-glycerol) + octadecanoyl-CoA = 1-hexadecanoyl-2-octadecanoyl-sn-glycero-3-phospho-(1'-sn-glycerol) + CoA. It catalyses the reaction 1-hexadecanoyl-sn-glycero-3-phospho-(1'-sn-glycerol) + (9Z)-octadecenoyl-CoA = 1-hexadecanoyl-2-(9Z-octadecenoyl)-sn-glycero-3-phospho-(1'-sn-glycerol) + CoA. The catalysed reaction is 1-hexadecanoyl-sn-glycero-3-phospho-(1'-sn-glycerol) + (9Z,12Z)-octadecadienoyl-CoA = 1-hexadecanoyl-2-(9Z,12Z-octadecadienoyl)-sn-glycero-3-phospho-(1'-sn-glycerol) + CoA. It carries out the reaction 1-tetradecanoyl-sn-glycero-3-phospho-(1'-sn-glycerol) + (9Z)-octadecenoyl-CoA = 1-tetradecanoyl-2-(9Z-octadecenoyl)-sn-glycero-3-phospho-(1'-sn-glycerol) + CoA. The enzyme catalyses 1-octadecanoyl-sn-glycero-3-phospho-(1'-sn-glycerol) + (9Z)-octadecenoyl-CoA = 1-octadecanoyl-2-(9Z-octadecenoyl)-sn-glycero-3-phospho-(1'-sn-glycerol) + CoA. It catalyses the reaction 1-(9Z-octadecenoyl)-sn-glycero-3-phospho-(1'-sn-glycerol) + (9Z)-octadecenoyl-CoA = 1,2-di-(9Z-octadecenoyl)-sn-glycero-3-phospho-(1'-sn-glycerol) + CoA. The catalysed reaction is 1-hexadecanoyl-sn-glycero-3-phospho-(1D-myo-inositol) + dodecanoyl-CoA = 1-hexadecanoyl-2-dodecanoyl-sn-glycero-3-phospho-(1D-myo-inositol) + CoA. It carries out the reaction 1',3'-bis-[1-acyl-sn-glycero-3-phospho]-glycerol + (9Z)-octadecenoyl-CoA = 1'-[1-acyl-2-(9Z)-octadecenoyl-sn-glycero-3-phospho],3'-[1-acyl,2-hydroxy-sn-glycero-3-phospho]-glycerol + CoA. The enzyme catalyses 1'-[1,2-diacyl-sn-glycero-3-phospho],3'-[1-acyl-sn-glycero-3-phospho]-glycerol + (9Z)-octadecenoyl-CoA = 1'-[1,2-diacyl-sn-glycero-3-phospho],3'-[1-acyl,2-(9Z)-octadecenoyl-sn-glycero-3-phospho]-glycerol + CoA. It catalyses the reaction 1'-[1,2-diacyl-sn-glycero-3-phospho],3'-[1-acyl-sn-glycero-3-phospho]-glycerol + (9Z,12Z)-octadecadienoyl-CoA = 1'-[1,2-diacyl-sn-glycero-3-phospho],3'-[1-acyl,2-(9Z,12Z)-octadecadienoyl-sn-glycero-3-phospho]-glycerol + CoA. The catalysed reaction is 1'-[1,2-diacyl-sn-glycero-3-phospho],3'-[1-acyl-sn-glycero-3-phospho]-glycerol + dodecanoyl-CoA = 1'-[1,2-diacyl-sn-glycero-3-phospho],3'-[1-acyl,2-dodecanoyl-sn-glycero-3-phospho]-glycerol + CoA. It carries out the reaction 1',3'-bis-[1-acyl-sn-glycero-3-phospho]-glycerol + dodecanoyl-CoA = 1'-[1-acyl-2-dodecanoyl-sn-glycero-3-phospho],3'-[1-acyl,2-hydroxy-sn-glycero-3-phospho]-glycerol + CoA. The enzyme catalyses a 1-acyl-sn-glycero-3-phosphate + (9Z)-octadecenoyl-CoA = a 1-acyl-2-(9Z-octadecenoyl)-sn-glycero-3-phosphate + CoA. It catalyses the reaction 1',3'-bis-[1-acyl-sn-glycero-3-phospho]-glycerol + (9Z,12Z)-octadecadienoyl-CoA = 1'-[1-acyl-2-(9Z,12Z)-octadecadienoyl-sn-glycero-3-phospho],3'-[1-acyl,2-hydroxy-sn-glycero-3-phospho]-glycerol + CoA. The catalysed reaction is 1',3'-bis-[1-acyl-sn-glycero-3-phospho]-glycerol + hexadecanoyl-CoA = 1'-[1-acyl-2-hexadecanoyl-sn-glycero-3-phospho],3'-[1-acyl,2-hydroxy-sn-glycero-3-phospho]-glycerol + CoA. It carries out the reaction 1',3'-bis-[1-acyl-sn-glycero-3-phospho]-glycerol + octadecanoyl-CoA = 1'-[1-acyl-2-octadecanoyl-sn-glycero-3-phospho],3'-[1-acyl,2-hydroxy-sn-glycero-3-phospho]-glycerol + CoA. The enzyme catalyses 1'-[1,2-diacyl-sn-glycero-3-phospho],3'-[1-acyl-sn-glycero-3-phospho]-glycerol + octanoyl-CoA = 1'-[1,2-diacyl-sn-glycero-3-phospho],3'-[1-acyl,2-octanoyl-sn-glycero-3-phospho]-glycerol + CoA. It catalyses the reaction 1',3'-bis-[1-acyl-sn-glycero-3-phospho]-glycerol + octanoyl-CoA = 1'-[1-acyl-2-octanoyl-sn-glycero-3-phospho],3'-[1-acyl,2-hydroxy-sn-glycero-3-phospho]-glycerol + CoA. The catalysed reaction is 1'-[1,2-diacyl-sn-glycero-3-phospho],3'-[1-acyl-sn-glycero-3-phospho]-glycerol + hexadecanoyl-CoA = 1'-[1,2-diacyl-sn-glycero-3-phospho],3'-[1-acyl,2-hexadecanoyl-sn-glycero-3-phospho]-glycerol + CoA. It carries out the reaction 1'-[1,2-diacyl-sn-glycero-3-phospho],3'-[1-acyl-sn-glycero-3-phospho]-glycerol + (5Z,8Z,11Z,14Z)-eicosatetraenoyl-CoA = 1'-[1,2-diacyl-sn-glycero-3-phospho],3'-[1-acyl,2-(5Z,8Z,11Z,14Z)-eicosatetraenoyl-sn-glycero-3-phospho]-glycerol + CoA. The enzyme catalyses 1',3'-bis-[1-acyl-sn-glycero-3-phospho]-glycerol + (5Z,8Z,11Z,14Z)-eicosatetraenoyl-CoA = 1'-[1-acyl-2-(5Z,8Z,11Z,14Z)-eicosatetraenoyl-sn-glycero-3-phospho],3'-[1-acyl,2-hydroxy-sn-glycero-3-phospho]-glycerol + CoA. It catalyses the reaction a 1-acyl-sn-glycero-3-phospho-(1D-myo-inositol) + octadecanoyl-CoA = a 1-acyl-2-octadecanoyl-sn-glycero-3-phospho-(1D-myo-inositol) + CoA. The catalysed reaction is a 2-acyl-sn-glycero-3-phospho-D-myo-inositol + octadecanoyl-CoA = 1-octadecanoyl-2-acyl-sn-glycero-3-phospho-1D-myo-inositol + CoA. It functions in the pathway phospholipid metabolism; CDP-diacylglycerol biosynthesis; CDP-diacylglycerol from sn-glycerol 3-phosphate: step 2/3. In terms of biological role, exhibits acyl-CoA:lysocardiolipin acyltransferase (ALCAT) activity; catalyzes the reacylation of lyso-cardiolipin to cardiolipin (CL), a key step in CL remodeling. Recognizes both monolysocardiolipin and dilysocardiolipin as substrates with a preference for linoleoyl-CoA and oleoyl-CoA as acyl donors. Also exhibits 1-acyl-sn-glycerol-3-phosphate acyltransferase activity (AGPAT) activity; converts 1-acyl-sn-glycerol-3- phosphate (lysophosphatidic acid or LPA) into 1,2-diacyl-sn-glycerol-3- phosphate (phosphatidic acid or PA) by incorporating an acyl moiety at the sn-2 position of the glycerol backbone. Possesses both lysophosphatidylinositol acyltransferase (LPIAT) and lysophosphatidylglycerol acyltransferase (LPGAT) activities. Required for establishment of the hematopoietic and endothelial lineages. The chain is Lysocardiolipin acyltransferase 1 (LCLAT1) from Gallus gallus (Chicken).